The sequence spans 632 residues: 1-deoxy-D-xylulose-5-phosphate synthase (632 aa).

Residues histidine 87 and 128–130 (GHS) each bind thiamine diphosphate. A Mg(2+)-binding site is contributed by aspartate 159. Thiamine diphosphate-binding positions include 160–161 (GA), asparagine 188, phenylalanine 295, and glutamate 378. Residue asparagine 188 coordinates Mg(2+).

Belongs to the transketolase family. DXPS subfamily. As to quaternary structure, homodimer. Mg(2+) serves as cofactor. Requires thiamine diphosphate as cofactor.

It carries out the reaction D-glyceraldehyde 3-phosphate + pyruvate + H(+) = 1-deoxy-D-xylulose 5-phosphate + CO2. It functions in the pathway metabolic intermediate biosynthesis; 1-deoxy-D-xylulose 5-phosphate biosynthesis; 1-deoxy-D-xylulose 5-phosphate from D-glyceraldehyde 3-phosphate and pyruvate: step 1/1. Functionally, catalyzes the acyloin condensation reaction between C atoms 2 and 3 of pyruvate and glyceraldehyde 3-phosphate to yield 1-deoxy-D-xylulose-5-phosphate (DXP). This is 1-deoxy-D-xylulose-5-phosphate synthase from Pseudomonas fluorescens (strain SBW25).